The sequence spans 528 residues: Ivanolysin (528 aa).

The first 23 residues, methionine 1 to glutamine 23, serve as a signal peptide directing secretion. The next 4 membrane-spanning stretches (beta stranded) occupy residues glutamate 213–alanine 226, valine 233–lysine 242, serine 311–threonine 320, and lysine 328–alanine 340. Residues glutamate 482 to arginine 492 carry the Conserved undecapeptide motif. Residues threonine 514–leucine 515 carry the Cholesterol binding motif.

This sequence belongs to the cholesterol-dependent cytolysin family. As to quaternary structure, homooligomeric pore complex of 35 to 50 subunits; when inserted in the host membrane.

Its subcellular location is the secreted. It localises to the host membrane. Its function is as follows. A cholesterol-dependent toxin that causes cytolysis by forming pores in cholesterol containing host membranes. After binding to target membranes, the protein undergoes a major conformation change, leading to its insertion in the host membrane and formation of an oligomeric pore complex. Cholesterol is required for binding to host membranes, membrane insertion and pore formation; cholesterol binding is mediated by a Thr-Leu pair in the C-terminus. Can be reversibly inactivated by oxidation. The sequence is that of Ivanolysin (ilo) from Listeria ivanovii.